Here is a 150-residue protein sequence, read N- to C-terminus: Ribosome maturation factor RimP (150 aa).

The protein belongs to the RimP family.

The protein localises to the cytoplasm. Functionally, required for maturation of 30S ribosomal subunits. The polypeptide is Ribosome maturation factor RimP (Francisella tularensis subsp. holarctica (strain LVS)).